The primary structure comprises 268 residues: Mediator of RNA polymerase II transcription subunit 8-A (268 aa).

2 coiled-coil regions span residues 1-26 (MQREEKQLEACLDALISQVSDIKNSL) and 117-160 (VEEL…EERE). Positions 190 to 268 (GLSNRRPPGQ…KSASMHPYQR (79 aa)) are disordered. Residues 223 to 246 (VPMSLQSNQQQQHMAGVSMSQGNQ) show a composition bias toward polar residues.

It belongs to the Mediator complex subunit 8 family. As to quaternary structure, component of the Mediator complex. May be part of a multisubunit E3 ubiquitin-protein ligase complex.

The protein localises to the nucleus. It functions in the pathway protein modification; protein ubiquitination. Component of the Mediator complex, a coactivator involved in the regulated transcription of nearly all RNA polymerase II-dependent genes. Mediator functions as a bridge to convey information from gene-specific regulatory proteins to the basal RNA polymerase II transcription machinery. Mediator is recruited to promoters by direct interactions with regulatory proteins and serves as a scaffold for the assembly of a functional preinitiation complex with RNA polymerase II and the general transcription factors. May play a role as a target recruitment subunit in E3 ubiquitin-protein ligase complexes and thus in ubiquitination and subsequent proteasomal degradation of target proteins. The protein is Mediator of RNA polymerase II transcription subunit 8-A (med8-a) of Xenopus laevis (African clawed frog).